Consider the following 132-residue polypeptide: Small ribosomal subunit protein uS8 (132 aa).

This sequence belongs to the universal ribosomal protein uS8 family. Part of the 30S ribosomal subunit. Contacts proteins S5 and S12.

In terms of biological role, one of the primary rRNA binding proteins, it binds directly to 16S rRNA central domain where it helps coordinate assembly of the platform of the 30S subunit. The protein is Small ribosomal subunit protein uS8 of Mycobacterium sp. (strain KMS).